Here is a 453-residue protein sequence, read N- to C-terminus: Growth/differentiation factor 9 (453 aa).

Positions 1 to 25 (MALPNKFFLWFCCFAWLCFPISLDS) are cleaved as a signal peptide. A propeptide spanning residues 26–318 (QPSRGEAQIV…EGVRLSRHRR (293 aa)) is cleaved from the precursor. Asn106, Asn163, Asn236, Asn255, and Asn269 each carry an N-linked (GlcNAc...) asparagine glycan. Residues 281-300 (SLHPKRKPSQDPDQKRGLSA) form a disordered region. N-linked (GlcNAc...) asparagine glycosylation occurs at Asn337. 3 cysteine pairs are disulfide-bonded: Cys352–Cys418, Cys381–Cys450, and Cys385–Cys452.

Belongs to the TGF-beta family. As to quaternary structure, homodimer or heterodimer (Potential). But, in contrast to other members of this family, cannot be disulfide-linked. In terms of processing, phosphorylated; phosphorylation is critical for GDF9 function.

It localises to the secreted. Required for ovarian folliculogenesis. This Bos taurus (Bovine) protein is Growth/differentiation factor 9 (GDF9).